Reading from the N-terminus, the 193-residue chain is Anthranilate synthase component 2 (193 aa).

The Glutamine amidotransferase type-1 domain maps to 3–193 (DILLLDNVDS…EQTLAWALAK (191 aa)). 57-59 (GPG) contacts L-glutamine. The active-site Nucleophile; for GATase activity is cysteine 84. L-glutamine is bound by residues glutamine 88 and 134–135 (SL). Residues histidine 170 and glutamate 172 each act as for GATase activity in the active site.

In terms of assembly, heterotetramer consisting of two non-identical subunits: a beta subunit (TrpG) and a large alpha subunit (TrpE).

It carries out the reaction chorismate + L-glutamine = anthranilate + pyruvate + L-glutamate + H(+). Its pathway is amino-acid biosynthesis; L-tryptophan biosynthesis; L-tryptophan from chorismate: step 1/5. In terms of biological role, part of a heterotetrameric complex that catalyzes the two-step biosynthesis of anthranilate, an intermediate in the biosynthesis of L-tryptophan. In the first step, the glutamine-binding beta subunit (TrpG) of anthranilate synthase (AS) provides the glutamine amidotransferase activity which generates ammonia as a substrate that, along with chorismate, is used in the second step, catalyzed by the large alpha subunit of AS (TrpE) to produce anthranilate. In the absence of TrpG, TrpE can synthesize anthranilate directly from chorismate and high concentrations of ammonia. This is Anthranilate synthase component 2 (trpG) from Serratia marcescens.